The primary structure comprises 133 residues: p53 and DNA damage-regulated protein 1 (133 aa).

It belongs to the prefoldin subunit beta family. In terms of assembly, component of the PAQosome complex which is responsible for the biogenesis of several protein complexes and which consists of R2TP complex members RUVBL1, RUVBL2, RPAP3 and PIH1D1, URI complex members PFDN2, PFDN6, PDRG1, UXT and URI1 as well as ASDURF, POLR2E and DNAAF10/WDR92. In terms of tissue distribution, predominantly expressed in normal testis and exhibits reduced but detectable expression in other organs.

It localises to the cytoplasm. Its function is as follows. May play a role in chaperone-mediated protein folding. This chain is p53 and DNA damage-regulated protein 1 (PDRG1), found in Homo sapiens (Human).